The chain runs to 484 residues: tRNA sulfurtransferase (484 aa).

The THUMP domain occupies 63–167; the sequence is REMIERLTCT…LDRLFVIHRQ (105 aa). Residues 185–186, lysine 267, glycine 289, and glutamine 298 each bind ATP; that span reads LM. A disulfide bond links cysteine 346 and cysteine 457. The region spanning 405-483 is the Rhodanese domain; that stretch reads VLPGQIVIDI…GHTNVRVYRP (79 aa). The Cysteine persulfide intermediate role is filled by cysteine 457.

The protein belongs to the ThiI family.

It localises to the cytoplasm. It catalyses the reaction [ThiI sulfur-carrier protein]-S-sulfanyl-L-cysteine + a uridine in tRNA + 2 reduced [2Fe-2S]-[ferredoxin] + ATP + H(+) = [ThiI sulfur-carrier protein]-L-cysteine + a 4-thiouridine in tRNA + 2 oxidized [2Fe-2S]-[ferredoxin] + AMP + diphosphate. It carries out the reaction [ThiS sulfur-carrier protein]-C-terminal Gly-Gly-AMP + S-sulfanyl-L-cysteinyl-[cysteine desulfurase] + AH2 = [ThiS sulfur-carrier protein]-C-terminal-Gly-aminoethanethioate + L-cysteinyl-[cysteine desulfurase] + A + AMP + 2 H(+). The protein operates within cofactor biosynthesis; thiamine diphosphate biosynthesis. Catalyzes the ATP-dependent transfer of a sulfur to tRNA to produce 4-thiouridine in position 8 of tRNAs, which functions as a near-UV photosensor. Also catalyzes the transfer of sulfur to the sulfur carrier protein ThiS, forming ThiS-thiocarboxylate. This is a step in the synthesis of thiazole, in the thiamine biosynthesis pathway. The sulfur is donated as persulfide by IscS. The sequence is that of tRNA sulfurtransferase from Pseudomonas paraeruginosa (strain DSM 24068 / PA7) (Pseudomonas aeruginosa (strain PA7)).